Consider the following 210-residue polypeptide: GEM-like protein 7 (210 aa).

The GRAM domain occupies 88–166 (KIYKRLFKVC…CKINGVNQSQ (79 aa)).

It belongs to the GEM family.

This Arabidopsis thaliana (Mouse-ear cress) protein is GEM-like protein 7.